The sequence spans 316 residues: ATP synthase gamma chain (316 aa).

Belongs to the ATPase gamma chain family. As to quaternary structure, F-type ATPases have 2 components, CF(1) - the catalytic core - and CF(0) - the membrane proton channel. CF(1) has five subunits: alpha(3), beta(3), gamma(1), delta(1), epsilon(1). CF(0) has three main subunits: a, b and c.

It localises to the cellular thylakoid membrane. Its function is as follows. Produces ATP from ADP in the presence of a proton gradient across the membrane. The gamma chain is believed to be important in regulating ATPase activity and the flow of protons through the CF(0) complex. The protein is ATP synthase gamma chain of Prochlorococcus marinus (strain AS9601).